The chain runs to 73 residues: Disintegrin trigramin-beta-2 (73 aa).

The 73-residue stretch at 1 to 73 folds into the Disintegrin domain; it reads EAGKDCDCGS…AGCPRNPFHA (73 aa). Intrachain disulfides connect Cys-6-Cys-21, Cys-8-Cys-16, Cys-15-Cys-38, Cys-29-Cys-35, Cys-34-Cys-59, and Cys-47-Cys-66. A Cell attachment site motif is present at residues 51–53; that stretch reads RGD.

This sequence belongs to the venom metalloproteinase (M12B) family. P-II subfamily. P-IIa sub-subfamily. Monomer (disintegrin). Expressed by the venom gland.

The protein localises to the secreted. Its function is as follows. Inhibits fibrinogen interaction with platelets. Acts by binding to the alpha-IIb/beta-3 receptor (ITGA2B/ITGB3) on the platelet surface and inhibits aggregation induced by ADP, thrombin, platelet-activating factor and collagen. The protein is Disintegrin trigramin-beta-2 of Craspedocephalus gramineus (Bamboo pit viper).